Here is a 312-residue protein sequence, read N- to C-terminus: Olfactory receptor 6C1 (312 aa).

At 1–23 the chain is on the extracellular side; sequence MRNHTEITEFILLGLTDDPNFQV. N-linked (GlcNAc...) asparagine glycosylation is present at Asn3. A helical membrane pass occupies residues 24 to 44; that stretch reads VIFVFLLITYMLSITGNLTLI. Residues 45–52 are Cytoplasmic-facing; the sequence is TITLLDSH. Residues 53–73 traverse the membrane as a helical segment; it reads LQTPMYFFLRNFSILEISFTT. Over 74–97 the chain is Extracellular; it reads VSIPKFLGNIISGDKTISFNNCIV. A disulfide bond links Cys95 and Cys187. Residues 98-118 form a helical membrane-spanning segment; the sequence is QLFFFILLGVTEFYLLAAMSY. Over 119-137 the chain is Cytoplasmic; the sequence is DRYVAICKPLHCLSIMNRR. A helical transmembrane segment spans residues 138–158; that stretch reads VCTLLVFTSWLVSFLIIFPAL. Over 159 to 195 the chain is Extracellular; it reads MLLLKLHYCRSNIIDHFTCDYFPLLQLACSDTKFLEV. The chain crosses the membrane as a helical span at residues 196-215; sequence MGFSCAAFTLMFTLALIFLS. Topologically, residues 216–235 are cytoplasmic; sequence YIYIIRTILRIPSTSQRTKA. The helical transmembrane segment at 236 to 256 threads the bilayer; sequence FSTCSSHMVVVSISYGSCIFM. Over 257 to 269 the chain is Extracellular; it reads YIKPSAKDRVSLS. Residues 270–290 traverse the membrane as a helical segment; the sequence is KGVAILNTSVAPMMNPFIYSL. The Cytoplasmic segment spans residues 291 to 312; that stretch reads RNQQVKQAFINMARKTVFFTST.

The protein belongs to the G-protein coupled receptor 1 family.

The protein localises to the cell membrane. Odorant receptor. The sequence is that of Olfactory receptor 6C1 (OR6C1) from Homo sapiens (Human).